Consider the following 403-residue polypeptide: Dynactin subunit 2-B (403 aa).

A disordered region spans residues 1-26 (MADPKYADLPGIARNEPDLYETSDLP). The stretch at 99-132 (PQQKYQRLLHEVQELTQEVEKTQSTLKESATEEK) forms a coiled coil. Residues 183-206 (AAKTRKDPEGKSSAKGPGPDNENL) form a disordered region. A compositionally biased stretch (basic and acidic residues) spans 184 to 194 (AKTRKDPEGKS). Positions 381 to 401 (KENLATVEDNFSSIDGRIKKL) form a coiled coil.

Belongs to the dynactin subunit 2 family. In terms of assembly, subunit of dynactin, a multiprotein complex part of a tripartite complex with dynein and a adapter, such as BICDL1, BICD2 or HOOK3. The dynactin complex is built around ACTR1A/ACTB filament and consists of an actin-related filament composed of a shoulder domain, a pointed end and a barbed end. Its length is defined by its flexible shoulder domain. The soulder is composed of 2 DCTN1 subunits, 4 DCTN2 and 2 DCTN3.

It is found in the cytoplasm. It localises to the cytoskeleton. Its subcellular location is the microtubule organizing center. The protein resides in the centrosome. The protein localises to the membrane. In terms of biological role, part of the dynactin complex that activates the molecular motor dynein for ultra-processive transport along microtubules. In the dynactin soulder domain, binds the ACTR1A filament and acts as a molecular ruler to determine the length. Modulates cytoplasmic dynein binding to an organelle, and plays a role in prometaphase chromosome alignment and spindle organization during mitosis. Involved in anchoring microtubules to centrosomes. In Xenopus laevis (African clawed frog), this protein is Dynactin subunit 2-B (dctn2-b).